A 96-amino-acid chain; its full sequence is MRHYELMVLLDPDVEERSVEPSLDQFLNVVRQDGGTVQKIDVWGRRRLAYEIRKKSEGIYAVIDLIANPQTVKELDRQLNLNENVLRTKLVRPDAR.

It belongs to the bacterial ribosomal protein bS6 family.

Functionally, binds together with bS18 to 16S ribosomal RNA. The protein is Small ribosomal subunit protein bS6 of Acidothermus cellulolyticus (strain ATCC 43068 / DSM 8971 / 11B).